The following is a 347-amino-acid chain: Isopentenyl-diphosphate delta-isomerase (347 aa).

Substrate is bound at residue Arg9–Lys10. FMN is bound by residues Ser67, Ser68–Thr70, Ser98, and Asn127. Ser98–Arg100 contacts substrate. Gln162 is a substrate binding site. Residue Glu163 coordinates Mg(2+). FMN contacts are provided by residues Lys194, Thr224, Gly274–Arg276, and Ala295–Ala296.

It belongs to the IPP isomerase type 2 family. Homooctamer. Dimer of tetramers. Requires FMN as cofactor. NADPH is required as a cofactor. The cofactor is Mg(2+).

It is found in the cytoplasm. The catalysed reaction is isopentenyl diphosphate = dimethylallyl diphosphate. Its function is as follows. Involved in the biosynthesis of isoprenoids. Catalyzes the 1,3-allylic rearrangement of the homoallylic substrate isopentenyl (IPP) to its allylic isomer, dimethylallyl diphosphate (DMAPP). The polypeptide is Isopentenyl-diphosphate delta-isomerase (Cronobacter sakazakii (strain ATCC BAA-894) (Enterobacter sakazakii)).